Here is a 203-residue protein sequence, read N- to C-terminus: Large ribosomal subunit protein bL25 (203 aa).

Belongs to the bacterial ribosomal protein bL25 family. CTC subfamily. As to quaternary structure, part of the 50S ribosomal subunit; part of the 5S rRNA/L5/L18/L25 subcomplex. Contacts the 5S rRNA. Binds to the 5S rRNA independently of L5 and L18.

This is one of the proteins that binds to the 5S RNA in the ribosome where it forms part of the central protuberance. In Rickettsia africae (strain ESF-5), this protein is Large ribosomal subunit protein bL25.